The primary structure comprises 283 residues: Elongation factor Ts (283 aa).

Positions 79-82 (TDFV) are involved in Mg(2+) ion dislocation from EF-Tu.

It belongs to the EF-Ts family.

It localises to the cytoplasm. Functionally, associates with the EF-Tu.GDP complex and induces the exchange of GDP to GTP. It remains bound to the aminoacyl-tRNA.EF-Tu.GTP complex up to the GTP hydrolysis stage on the ribosome. The protein is Elongation factor Ts of Shewanella denitrificans (strain OS217 / ATCC BAA-1090 / DSM 15013).